Reading from the N-terminus, the 206-residue chain is Large ribosomal subunit protein eL13z (206 aa).

A disordered region spans residues Glu-183–Lys-206. The segment covering Asn-186–Lys-195 has biased composition (basic residues). Over residues Arg-196–Lys-206 the composition is skewed to basic and acidic residues.

This sequence belongs to the eukaryotic ribosomal protein eL13 family.

This chain is Large ribosomal subunit protein eL13z, found in Brassica napus (Rape).